The chain runs to 196 residues: Holliday junction branch migration complex subunit RuvA (196 aa).

The segment at 1–63 is domain I; that stretch reads MYDYIKGTLV…DDAHLLFGFH (63 aa). Residues 64–142 are domain II; the sequence is TEDEKEVFLK…ELPAETTNTT (79 aa). The flexible linker stretch occupies residues 143–146; the sequence is ANQT. The interval 147–196 is domain III; it reads AGNQQLDEAMEALLALGYKSTELKKVKAFFEDTNETAEQYIKSALKMLMK.

It belongs to the RuvA family. In terms of assembly, homotetramer. Forms an RuvA(8)-RuvB(12)-Holliday junction (HJ) complex. HJ DNA is sandwiched between 2 RuvA tetramers; dsDNA enters through RuvA and exits via RuvB. An RuvB hexamer assembles on each DNA strand where it exits the tetramer. Each RuvB hexamer is contacted by two RuvA subunits (via domain III) on 2 adjacent RuvB subunits; this complex drives branch migration. In the full resolvosome a probable DNA-RuvA(4)-RuvB(12)-RuvC(2) complex forms which resolves the HJ.

The protein resides in the cytoplasm. In terms of biological role, the RuvA-RuvB-RuvC complex processes Holliday junction (HJ) DNA during genetic recombination and DNA repair, while the RuvA-RuvB complex plays an important role in the rescue of blocked DNA replication forks via replication fork reversal (RFR). RuvA specifically binds to HJ cruciform DNA, conferring on it an open structure. The RuvB hexamer acts as an ATP-dependent pump, pulling dsDNA into and through the RuvAB complex. HJ branch migration allows RuvC to scan DNA until it finds its consensus sequence, where it cleaves and resolves the cruciform DNA. The polypeptide is Holliday junction branch migration complex subunit RuvA (Streptococcus thermophilus (strain CNRZ 1066)).